Reading from the N-terminus, the 931-residue chain is Isoleucine--tRNA ligase (931 aa).

A 'HIGH' region motif is present at residues 57 to 67; that stretch reads PYANGNIHIGH. Glu-555 provides a ligand contact to L-isoleucyl-5'-AMP. The 'KMSKS' region motif lies at 596–600; it reads KMSKS. Lys-599 contacts ATP. Residues Cys-890, Cys-893, Cys-910, and Cys-913 each contribute to the Zn(2+) site.

Belongs to the class-I aminoacyl-tRNA synthetase family. IleS type 1 subfamily. As to quaternary structure, monomer. Zn(2+) is required as a cofactor.

Its subcellular location is the cytoplasm. It catalyses the reaction tRNA(Ile) + L-isoleucine + ATP = L-isoleucyl-tRNA(Ile) + AMP + diphosphate. Functionally, catalyzes the attachment of isoleucine to tRNA(Ile). As IleRS can inadvertently accommodate and process structurally similar amino acids such as valine, to avoid such errors it has two additional distinct tRNA(Ile)-dependent editing activities. One activity is designated as 'pretransfer' editing and involves the hydrolysis of activated Val-AMP. The other activity is designated 'posttransfer' editing and involves deacylation of mischarged Val-tRNA(Ile). In Limosilactobacillus reuteri subsp. reuteri (strain JCM 1112) (Lactobacillus reuteri), this protein is Isoleucine--tRNA ligase.